Reading from the N-terminus, the 938-residue chain is Isoleucine--tRNA ligase (938 aa).

The 'HIGH' region signature appears at 58–68; sequence PYANGSIHIGH. Glu561 is an L-isoleucyl-5'-AMP binding site. Positions 602 to 606 match the 'KMSKS' region motif; that stretch reads KMSKS. Residue Lys605 participates in ATP binding. Zn(2+)-binding residues include Cys901, Cys904, Cys921, and Cys924.

The protein belongs to the class-I aminoacyl-tRNA synthetase family. IleS type 1 subfamily. Monomer. It depends on Zn(2+) as a cofactor.

The protein resides in the cytoplasm. It carries out the reaction tRNA(Ile) + L-isoleucine + ATP = L-isoleucyl-tRNA(Ile) + AMP + diphosphate. Its function is as follows. Catalyzes the attachment of isoleucine to tRNA(Ile). As IleRS can inadvertently accommodate and process structurally similar amino acids such as valine, to avoid such errors it has two additional distinct tRNA(Ile)-dependent editing activities. One activity is designated as 'pretransfer' editing and involves the hydrolysis of activated Val-AMP. The other activity is designated 'posttransfer' editing and involves deacylation of mischarged Val-tRNA(Ile). The protein is Isoleucine--tRNA ligase of Cronobacter sakazakii (strain ATCC BAA-894) (Enterobacter sakazakii).